The primary structure comprises 224 residues: MVLLSKFDFFGNKAGEVELPDAFFAQEGNGLQLVKDYIVAIRANKRQWSACTRNRSEVSHSTKKPFRQKGTGNARQGCLAAPQFRGGGIVFGPKPKFDQHVRINKKEKRAAIRLLLSQKIQTNRLIVADDSVFTKSLTAPKTKEALRFLKSCNVECRGVLFIDDLNHAQNNEGLRLSLRNLPAVRGFAYGMNVNGYDLVSARNIVISEKALTGLVGHLTSGTKD.

Residues 54 to 73 (NRSEVSHSTKKPFRQKGTGN) form a disordered region.

It belongs to the universal ribosomal protein uL4 family. In terms of assembly, part of the 50S ribosomal subunit.

Functionally, one of the primary rRNA binding proteins, this protein initially binds near the 5'-end of the 23S rRNA. It is important during the early stages of 50S assembly. It makes multiple contacts with different domains of the 23S rRNA in the assembled 50S subunit and ribosome. Forms part of the polypeptide exit tunnel. This Chlamydia felis (strain Fe/C-56) (Chlamydophila felis) protein is Large ribosomal subunit protein uL4.